Here is a 186-residue protein sequence, read N- to C-terminus: UPF0301 protein Nmul_A2478 (186 aa).

The protein belongs to the UPF0301 (AlgH) family.

The polypeptide is UPF0301 protein Nmul_A2478 (Nitrosospira multiformis (strain ATCC 25196 / NCIMB 11849 / C 71)).